The sequence spans 301 residues: Mitochondrial carnitine/acylcarnitine carrier protein (301 aa).

Ala2 is subject to N-acetylalanine. Over 2–12 (AEEPKPISPLK) the chain is Cytoplasmic. Solcar repeat units lie at residues 8-99 (ISPL…GKRL), 108-196 (LTYP…LKNL), and 207-293 (LSVP…PMKI). The chain crosses the membrane as a helical span at residues 13 to 31 (NLLAGGFGGVCLVFVGHPL). Residues 32-73 (DTVKVRLQTQPPSLPGQPPMYSGTIDCFRKTLFREGITGLYR) are Mitochondrial matrix-facing. The chain crosses the membrane as a helical span at residues 74-93 (GMAAPIIGVTPMFAVCFFGF). The Cytoplasmic portion of the chain corresponds to 94–112 (GLGKRLQQKSPEDELTYPQ). The helical transmembrane segment at 113–131 (LFTAGMLSGVFTTGIMTPG) threads the bilayer. The Mitochondrial matrix portion of the chain corresponds to 132 to 170 (ERIKCLLQIQASSGKNKYSGTLDCAKKLYQEFGIRGFYK). Residues Lys148 and Lys157 each carry the N6-acetyllysine modification. Lys170 bears the N6-acetyllysine; alternate mark. Lys170 carries the post-translational modification N6-succinyllysine; alternate. A helical transmembrane segment spans residues 171–190 (GTALTLMRDVPASGMYFMTY). Over 191–211 (EWLKNLFTPQGKSVHDLSVPR) the chain is Cytoplasmic. The helical transmembrane segment at 212–230 (VLVAGGFRGIFNWVVAIPP) threads the bilayer. The Mitochondrial matrix portion of the chain corresponds to 231 to 267 (DVLKSRFQTAPPGKYPNGFRDVLRELIREEGVTSLYK). A helical membrane pass occupies residues 268 to 287 (GFNAVMIRAFPANAACFLGF). Residues 288–301 (EIPMKILNWIAPNL) are Cytoplasmic-facing.

The protein belongs to the mitochondrial carrier (TC 2.A.29) family. The N-terminus is blocked.

The protein resides in the mitochondrion inner membrane. It carries out the reaction O-acetyl-(R)-carnitine(in) + (R)-carnitine(out) = O-acetyl-(R)-carnitine(out) + (R)-carnitine(in). It catalyses the reaction an O-acyl-(R)-carnitine(in) + (R)-carnitine(out) = an O-acyl-(R)-carnitine(out) + (R)-carnitine(in). The catalysed reaction is O-propanoyl-(R)-carnitine(in) + (R)-carnitine(out) = O-propanoyl-(R)-carnitine(out) + (R)-carnitine(in). The enzyme catalyses O-hexadecanoyl-(R)-carnitine(in) + (R)-carnitine(out) = O-hexadecanoyl-(R)-carnitine(out) + (R)-carnitine(in). It carries out the reaction O-octanoyl-(R)-carnitine(in) + (R)-carnitine(out) = O-octanoyl-(R)-carnitine(out) + (R)-carnitine(in). It catalyses the reaction (R)-carnitine(in) = (R)-carnitine(out). In terms of biological role, mediates the electroneutral exchange of acylcarnitines (O-acyl-(R)-carnitine or L-acylcarnitine) of different acyl chain lengths (ranging from O-acetyl-(R)-carnitine to long-chain O-acyl-(R)-carnitines) with free carnitine ((R)-carnitine or L-carnitine) across the mitochondrial inner membrane, via a ping-pong mechanism. Key player in the mitochondrial oxidation pathway, it translocates the fatty acids in the form of acylcarnitines into the mitochondrial matrix, where the carnitine palmitoyltransferase 2 (CPT-2) activates them to undergo fatty acid beta-oxidation. Catalyzes the unidirectional transport (uniport) of carnitine at lower rates than the antiport (exchange). The protein is Mitochondrial carnitine/acylcarnitine carrier protein of Rattus norvegicus (Rat).